We begin with the raw amino-acid sequence, 428 residues long: Histidine--tRNA ligase (428 aa).

This sequence belongs to the class-II aminoacyl-tRNA synthetase family. In terms of assembly, homodimer.

It localises to the cytoplasm. It catalyses the reaction tRNA(His) + L-histidine + ATP = L-histidyl-tRNA(His) + AMP + diphosphate + H(+). In Lactobacillus delbrueckii subsp. bulgaricus (strain ATCC 11842 / DSM 20081 / BCRC 10696 / JCM 1002 / NBRC 13953 / NCIMB 11778 / NCTC 12712 / WDCM 00102 / Lb 14), this protein is Histidine--tRNA ligase.